Here is a 188-residue protein sequence, read N- to C-terminus: Elongation factor P (188 aa).

The residue at position 34 (lysine 34) is an N6-(3,6-diaminohexanoyl)-5-hydroxylysine.

Belongs to the elongation factor P family. May be beta-lysylated on the epsilon-amino group of Lys-34 by the combined action of EpmA and EpmB, and then hydroxylated on the C5 position of the same residue by EpmC (if this protein is present). Lysylation is critical for the stimulatory effect of EF-P on peptide-bond formation. The lysylation moiety may extend toward the peptidyltransferase center and stabilize the terminal 3-CCA end of the tRNA. Hydroxylation of the C5 position on Lys-34 may allow additional potential stabilizing hydrogen-bond interactions with the P-tRNA.

It localises to the cytoplasm. It functions in the pathway protein biosynthesis; polypeptide chain elongation. Its function is as follows. Involved in peptide bond synthesis. Alleviates ribosome stalling that occurs when 3 or more consecutive Pro residues or the sequence PPG is present in a protein, possibly by augmenting the peptidyl transferase activity of the ribosome. Modification of Lys-34 is required for alleviation. This Stenotrophomonas maltophilia (strain K279a) protein is Elongation factor P.